A 468-amino-acid chain; its full sequence is 6-phospho-beta-galactosidase (468 aa).

5 residues coordinate D-galactose 6-phosphate: Gln19, His116, Asn159, Glu160, and Asn297. Glu160 (proton donor) is an active-site residue. Glu375 (nucleophile) is an active-site residue. Residues Ser428, Trp429, Lys435, and Tyr437 each coordinate D-galactose 6-phosphate.

It belongs to the glycosyl hydrolase 1 family.

The enzyme catalyses a 6-phospho-beta-D-galactoside + H2O = D-galactose 6-phosphate + an alcohol. Its pathway is carbohydrate metabolism; lactose degradation; D-galactose 6-phosphate and beta-D-glucose from lactose 6-phosphate: step 1/1. The chain is 6-phospho-beta-galactosidase from Streptococcus gordonii (strain Challis / ATCC 35105 / BCRC 15272 / CH1 / DL1 / V288).